Here is a 380-residue protein sequence, read N- to C-terminus: Cytochrome b (380 aa).

The next 4 helical transmembrane spans lie at 34–54, 78–99, 114–134, and 179–199; these read FGSLLGICLATQILTGLLLAA, WLIRNLHANGASFFFICIYLHI, WNTGIILLLTLMATAFVGYVL, and FFTLHFLLPFMIAGLTLIHLT. Heme b-binding residues include His-84 and His-98. Residues His-183 and His-197 each contribute to the heme b site. Residue His-202 participates in a ubiquinone binding. 4 consecutive transmembrane segments (helical) span residues 227 to 247, 289 to 309, 321 to 341, and 348 to 368; these read TKDILGFILLLLPLTALALFS, LGGVLALAASVLILFLIPLLH, LSQLLFWTLVANLTILTWIGS, and FIIIGQLASLTYFTILLILFP.

This sequence belongs to the cytochrome b family. The cytochrome bc1 complex contains 11 subunits: 3 respiratory subunits (MT-CYB, CYC1 and UQCRFS1), 2 core proteins (UQCRC1 and UQCRC2) and 6 low-molecular weight proteins (UQCRH/QCR6, UQCRB/QCR7, UQCRQ/QCR8, UQCR10/QCR9, UQCR11/QCR10 and a cleavage product of UQCRFS1). This cytochrome bc1 complex then forms a dimer. Heme b serves as cofactor.

It localises to the mitochondrion inner membrane. Functionally, component of the ubiquinol-cytochrome c reductase complex (complex III or cytochrome b-c1 complex) that is part of the mitochondrial respiratory chain. The b-c1 complex mediates electron transfer from ubiquinol to cytochrome c. Contributes to the generation of a proton gradient across the mitochondrial membrane that is then used for ATP synthesis. The sequence is that of Cytochrome b (MT-CYB) from Eudyptes chrysolophus (Macaroni penguin).